The sequence spans 443 residues: Transcriptional adapter 2-alpha (443 aa).

Ser-6 bears the Phosphoserine mark. A ZZ-type zinc finger spans residues Ser-12–Pro-69. Zn(2+) contacts are provided by Cys-17, Cys-20, Cys-31, Cys-34, Cys-42, Cys-45, His-55, and His-59. In terms of domain architecture, SANT spans Val-70–Pro-122. Glycyl lysine isopeptide (Lys-Gly) (interchain with G-Cter in SUMO2) cross-links involve residues Lys-132 and Lys-138. An SWIRM domain is found at Asn-356–Ala-443. Residues Lys-426 to Ile-435 mediate DNA binding.

Interacts with GCN5. Interacts with NR3C1. Associated with the P/CAF protein in the PCAF complex. Component of the PCAF complex, at least composed of TADA2L/ADA2, TADA3L/ADA3, TAF5L/PAF65-beta, TAF6L/PAF65-alpha, TAF10/TAFII30, TAF12/TAFII20, TAF9/TAFII31 and TRRAP. Component of the ADA2A-containing complex (ATAC), composed of KAT14, KAT2A, TADA2L, TADA3L, ZZ3, MBIP, WDR5, YEATS2, CCDC101 and DR1. Interacts with CCDC134.

The protein resides in the nucleus. It is found in the chromosome. In terms of biological role, component of the ATAC complex, a complex with histone acetyltransferase activity on histones H3 and H4. Required for the function of some acidic activation domains, which activate transcription from a distant site. Binds double-stranded DNA. Binds dinucleosomes, probably at the linker region between neighboring nucleosomes. Plays a role in chromatin remodeling. May promote TP53/p53 'Lys-321' acetylation, leading to reduced TP53 stability and transcriptional activity. May also promote XRCC6 acetylation thus facilitating cell apoptosis in response to DNA damage. The protein is Transcriptional adapter 2-alpha (Tada2a) of Mus musculus (Mouse).